A 245-amino-acid chain; its full sequence is Carboxymethylenebutenolidase homolog (245 aa).

At A2 the chain carries N-acetylalanine. Catalysis depends on residues C132, D179, and H212. S223 carries the phosphoserine modification.

This sequence belongs to the dienelactone hydrolase family.

The protein localises to the cytoplasm. It localises to the cytosol. Its function is as follows. Cysteine hydrolase. This chain is Carboxymethylenebutenolidase homolog (Cmbl), found in Rattus norvegicus (Rat).